Consider the following 1719-residue polypeptide: Cilia- and flagella-associated protein 43 (1719 aa).

Residues 94-120 form a disordered region; that stretch reads VREEGAGGGADKPSGSGAVSGKQQSSG. WD repeat units lie at residues 122–165, 174–214, 226–263, 308–345, 413–452, and 513–552; these read SVVL…GRCR, SSTS…EKAV, PAGAEVTCHAWGPGGLYVGTSTGGLVLLDTATMAPLQL, TSGAAVTALTLNRDLVAVAGADGSVRVFVSVPAAAAAI, CHVGRLAGVVPHPGGGAFLTTGSDGSVRVWSTTDGALLGR, and LHSAPVDVLVFSPANDLLLSAGRDGIAWLCSVDARGGRVR. The tract at residues 569-596 is disordered; it reads TWPRSDGGSGAASGHAQAGPVSTTSAEG. 2 WD repeats span residues 697-736 and 749-788; these read AHARASGGVAVAPGGHLLASGAADGTVALRNMSLITLAAQ and ITAGGVVTVSFDATGRYLASAGADGALFVYELSKRAAVAN. The disordered stretch occupies residues 1022-1045; the sequence is RAKQEAARKADEDAAKRSAKDNAG. Residues 1073-1114 form a WD 9 repeat; sequence PKPAWLVALGVEPDAVNPKLITEEQNRELKEWQAKEKSLQEE. 3 disordered regions span residues 1220–1269, 1277–1296, and 1325–1372; these read MPGG…AAAA, ATAAGGAGSSGGAAPCGAAG, and TLNP…AAAA. Positions 1221–1233 are enriched in gly residues; it reads PGGGAIGAAGGHQ. Positions 1257 to 1269 are enriched in low complexity; that stretch reads ASLAHSPSGAAAA. The span at 1344–1358 shows a compositional bias: low complexity; it reads SSALHPSHSHASVHG. 2 coiled-coil regions span residues 1524-1609 and 1651-1679; these read AAQW…RSAQ and HKKLKEIALAQQNELGELRQQLEKLRLRT. Residues 1685 to 1719 form a disordered region; the sequence is ESGAVAGMPSPPRRLPPDIKLLAGSPSSSSVAGRT. Residues 1709 to 1719 are compositionally biased toward polar residues; the sequence is SPSSSSVAGRT.

The protein belongs to the CFAP43 family.

It localises to the cell projection. The protein resides in the cilium. Its subcellular location is the flagellum. The protein localises to the cytoplasm. It is found in the cytoskeleton. It localises to the flagellum axoneme. Its function is as follows. Flagellar protein involved in flagellum axoneme organization and function. The polypeptide is Cilia- and flagella-associated protein 43 (Chlamydomonas reinhardtii (Chlamydomonas smithii)).